Consider the following 698-residue polypeptide: Phenylalanine aminomutase (L-beta-phenylalanine forming) (698 aa).

Tyr-80 functions as the Proton donor/acceptor in the catalytic mechanism. Residues 175–177 (ASG) constitute a cross-link (5-imidazolinone (Ala-Gly)). Ser-176 carries the post-translational modification 2,3-didehydroalanine (Ser). (E)-cinnamate is bound by residues Asn-231, Gln-319, Arg-325, Asn-355, Lys-427, Glu-455, and Asn-458.

Belongs to the PAL/histidase family. In terms of assembly, homotetramer. Post-translationally, contains an active site 4-methylidene-imidazol-5-one (MIO), which is formed autocatalytically by cyclization and dehydration of residues Ala-Ser-Gly.

The protein resides in the cytoplasm. The catalysed reaction is L-phenylalanine = L-beta-phenylalanine. It carries out the reaction L-phenylalanine = (E)-cinnamate + NH4(+). The protein operates within alkaloid biosynthesis; taxol biosynthesis. It participates in phenylpropanoid metabolism; trans-cinnamate biosynthesis; trans-cinnamate from L-phenylalanine: step 1/1. In terms of biological role, phenylalanine aminomutase that catalyzes the rearrangement of L-phenylalanine to R-beta-phenylalanine. Catalyzes the first committed step in the biosynthesis of the side chain of the alkaloid taxol (paclitaxel), a widely-used compound with antitumor activity. Also has low phenylalanine ammonia-lyase activity. In Taxus canadensis (Canadian yew), this protein is Phenylalanine aminomutase (L-beta-phenylalanine forming) (pam).